We begin with the raw amino-acid sequence, 268 residues long: Putative S-adenosyl-L-methionine-dependent methyltransferase MAP_0663 (268 aa).

S-adenosyl-L-methionine-binding positions include D124 and 153 to 154 (DL).

The protein belongs to the UPF0677 family.

Exhibits S-adenosyl-L-methionine-dependent methyltransferase activity. The chain is Putative S-adenosyl-L-methionine-dependent methyltransferase MAP_0663 from Mycolicibacterium paratuberculosis (strain ATCC BAA-968 / K-10) (Mycobacterium paratuberculosis).